Here is a 415-residue protein sequence, read N- to C-terminus: Lipoyl synthase, mitochondrial (415 aa).

A mitochondrion-targeting transit peptide spans 1–32 (MAVSTSHFRSLCASSRSLSRTGIVAPISCRGY). The segment at 30–50 (RGYATTEPSPSATSTTTTTTA) is disordered. Residues 33–49 (ATTEPSPSATSTTTTTT) are compositionally biased toward low complexity. [4Fe-4S] cluster contacts are provided by C132, C137, C143, C163, C167, C170, and S378. The 222-residue stretch at 146 to 367 (GSDKSAATAT…RQRALDMGFL (222 aa)) folds into the Radical SAM core domain.

It belongs to the radical SAM superfamily. Lipoyl synthase family. The cofactor is [4Fe-4S] cluster.

The protein localises to the mitochondrion. It carries out the reaction [[Fe-S] cluster scaffold protein carrying a second [4Fe-4S](2+) cluster] + N(6)-octanoyl-L-lysyl-[protein] + 2 oxidized [2Fe-2S]-[ferredoxin] + 2 S-adenosyl-L-methionine + 4 H(+) = [[Fe-S] cluster scaffold protein] + N(6)-[(R)-dihydrolipoyl]-L-lysyl-[protein] + 4 Fe(3+) + 2 hydrogen sulfide + 2 5'-deoxyadenosine + 2 L-methionine + 2 reduced [2Fe-2S]-[ferredoxin]. It functions in the pathway protein modification; protein lipoylation via endogenous pathway; protein N(6)-(lipoyl)lysine from octanoyl-[acyl-carrier-protein]: step 2/2. In terms of biological role, catalyzes the radical-mediated insertion of two sulfur atoms into the C-6 and C-8 positions of the octanoyl moiety bound to the lipoyl domains of lipoate-dependent enzymes, thereby converting the octanoylated domains into lipoylated derivatives. The protein is Lipoyl synthase, mitochondrial of Neosartorya fischeri (strain ATCC 1020 / DSM 3700 / CBS 544.65 / FGSC A1164 / JCM 1740 / NRRL 181 / WB 181) (Aspergillus fischerianus).